Consider the following 307-residue polypeptide: UDP-N-acetylenolpyruvoylglucosamine reductase (307 aa).

The FAD-binding PCMH-type domain maps to 33–197 (TGGNADFYIT…LEAAFTLAPG (165 aa)). Arg176 is a catalytic residue. Ser226 serves as the catalytic Proton donor. Glu296 is a catalytic residue.

This sequence belongs to the MurB family. It depends on FAD as a cofactor.

The protein localises to the cytoplasm. The catalysed reaction is UDP-N-acetyl-alpha-D-muramate + NADP(+) = UDP-N-acetyl-3-O-(1-carboxyvinyl)-alpha-D-glucosamine + NADPH + H(+). It participates in cell wall biogenesis; peptidoglycan biosynthesis. Its function is as follows. Cell wall formation. This Staphylococcus aureus (strain MRSA252) protein is UDP-N-acetylenolpyruvoylglucosamine reductase.